The sequence spans 189 residues: Interferon alpha-8 (189 aa).

Positions 1–23 (MALTFYLLVALVVLSYKSFSSLG) are cleaved as a signal peptide. Intrachain disulfides connect Cys-24-Cys-122 and Cys-52-Cys-162.

The protein belongs to the alpha/beta interferon family.

It is found in the secreted. Produced by macrophages, IFN-alpha have antiviral activities. Interferon stimulates the production of two enzymes: a protein kinase and an oligoadenylate synthetase. This chain is Interferon alpha-8 (IFNA8), found in Homo sapiens (Human).